A 241-amino-acid chain; its full sequence is Ribonuclease PH (241 aa).

Phosphate contacts are provided by residues R90 and 128–130; that span reads GTR.

It belongs to the RNase PH family. Homohexameric ring arranged as a trimer of dimers.

It catalyses the reaction tRNA(n+1) + phosphate = tRNA(n) + a ribonucleoside 5'-diphosphate. In terms of biological role, phosphorolytic 3'-5' exoribonuclease that plays an important role in tRNA 3'-end maturation. Removes nucleotide residues following the 3'-CCA terminus of tRNAs; can also add nucleotides to the ends of RNA molecules by using nucleoside diphosphates as substrates, but this may not be physiologically important. Probably plays a role in initiation of 16S rRNA degradation (leading to ribosome degradation) during starvation. This chain is Ribonuclease PH, found in Corynebacterium diphtheriae (strain ATCC 700971 / NCTC 13129 / Biotype gravis).